The following is an 860-amino-acid chain: Putative mixed-linked glucan synthase 1 (860 aa).

The next 2 membrane-spanning stretches (helical) occupy residues 63–83 (ILHP…AFFA) and 93–113 (GAWL…SWVL). Asp183 is a catalytic residue. Residues 235 to 263 (ELMSDHRRVRREYEEFKVRIDSLSSTIRQ) are a coiled coil. Substrate-binding residues include Asp381 and Asp383. The active site involves Asp549. Helical transmembrane passes span 625-645 (TYPI…MWLI), 655-675 (FGEY…IGMF), 693-713 (FYMI…ALKL), 747-767 (LLIP…VAVG), 781-801 (LAVL…PFAL), and 812-832 (AVLF…YVAF).

It belongs to the glycosyltransferase 2 family. Plant cellulose synthase-like F subfamily.

It is found in the golgi apparatus membrane. Functionally, may catalyze both beta-1,3 and beta-1,4 glycosidic linkage on beta-D-glucan. Essential for (1,3;1,4)-beta-D-glucans synthesis in grasses and cereals (Poaceae). The mixed-linked glucans (which are not present in walls of dicotyledons or most other monocotyledonous plants) are particularly important constituents of the walls of the starchy endosperm and aleurone cells of cereal grains such as oats, wheat, rice and barley. They can account for up to 70% by weight of the wall. In Oryza sativa subsp. japonica (Rice), this protein is Putative mixed-linked glucan synthase 1 (CSFL1).